The following is a 65-amino-acid chain: Beta-defensin 17 (65 aa).

An N-terminal signal peptide occupies residues 1-19 (MKFHLLFFILLFSITILTG). 3 disulfide bridges follow: C35–C63, C42–C56, and C46–C64.

The protein belongs to the beta-defensin family.

The protein resides in the secreted. Has antibacterial activity. This Rattus norvegicus (Rat) protein is Beta-defensin 17 (Defb17).